A 111-amino-acid polypeptide reads, in one-letter code: Large ribosomal subunit protein uL24 (111 aa).

This sequence belongs to the universal ribosomal protein uL24 family. As to quaternary structure, part of the 50S ribosomal subunit.

Its function is as follows. One of two assembly initiator proteins, it binds directly to the 5'-end of the 23S rRNA, where it nucleates assembly of the 50S subunit. In terms of biological role, one of the proteins that surrounds the polypeptide exit tunnel on the outside of the subunit. The polypeptide is Large ribosomal subunit protein uL24 (Bifidobacterium animalis subsp. lactis (strain AD011)).